We begin with the raw amino-acid sequence, 478 residues long: Serralysin C (478 aa).

Residues 1–17 (MEKNLSSRDDDALHSLS) constitute a propeptide that is removed on maturation. Histidine 187 provides a ligand contact to Zn(2+). The active site involves glutamate 188. Positions 191 and 227 each coordinate Zn(2+). The Ca(2+) site is built by arginine 264, glycine 266, aspartate 296, glycine 298, glycine 299, aspartate 301, threonine 338, glutamate 340, glycine 345, glycine 347, aspartate 349, asparagine 354, alanine 356, asparagine 358, glycine 362, glycine 363, alanine 364, glycine 365, aspartate 367, glycine 371, glycine 372, glycine 374, aspartate 376, glycine 380, glycine 381, glycine 383, aspartate 385, aspartate 394, aspartate 401, and aspartate 411. Hemolysin-type calcium-binding repeat units lie at residues 343–360 (IGGS…DNTL) and 361–378 (RGGA…ADRL).

Belongs to the peptidase M10B family. Ca(2+) serves as cofactor. Requires Zn(2+) as cofactor.

Its subcellular location is the secreted. The catalysed reaction is Preferential cleavage of bonds with hydrophobic residues in P1'.. The protein is Serralysin C (prtC) of Dickeya chrysanthemi (Pectobacterium chrysanthemi).